The primary structure comprises 1150 residues: Solute carrier family 12 member 6 (1150 aa).

Residues 1–135 (MHPPETTTKM…DEYFDKNLAL (135 aa)) lie on the Cytoplasmic side of the membrane. The tract at residues 20-66 (TKIDDIPGLSDTSPDLSSRSSSRVRFSSRESVPETSRSEPMSEMSGA) is disordered. A compositionally biased stretch (low complexity) spans 28 to 45 (LSDTSPDLSSRSSSRVRF). Ser-32 and Ser-120 each carry phosphoserine. Residues 136-158 (FEEEMDTRPKVSSLLNRMANYTN) traverse the membrane as a discontinuously helical segment. The K(+) site is built by Ser-147 and Ser-148. Ser-148 is subject to Phosphoserine. A chloride-binding site is contributed by Asn-151. Residues 159 to 165 (LTQGAKE) lie on the Extracellular side of the membrane. The tract at residues 161–181 (QGAKEHEEAENITEGKKKPTK) is disordered. The segment covering 163–177 (AKEHEEAENITEGKK) has biased composition (basic and acidic residues). A helical transmembrane segment spans residues 166 to 188 (HEEAENITEGKKKPTKTPQMGTF). At 189–211 (MGVYLPCLQNIFGVILFLRLTWV) the chain is on the cytoplasmic side. The helical transmembrane segment at 212–245 (VGTAGVLQAFAIVLICCCCTMLTAISMSAIATNG) threads the bilayer. Topologically, residues 246–263 (VVPAGGSYFMISRALGPE) are extracellular. The next 2 helical transmembrane spans lie at 264-287 (FGGA…ILGA) and 288-316 (IEIF…AMLN). At 317-433 (NMRVYGTAFL…FVHNNVTSIQ (117 aa)) the chain is on the extracellular side. Cysteines 375 and 390 form a disulfide. Asn-379, Asn-398, Asn-411, and Asn-428 each carry an N-linked (GlcNAc...) asparagine glycan. An intrachain disulfide couples Cys-410 to Cys-420. Residues 434-454 (GIPGLASGIITENLWSNYLPK) form a helical membrane-spanning segment. K(+) is bound by residues Ile-443, Thr-444, and Asn-446. 2 residues coordinate chloride: Ile-443 and Thr-444. The chloride site is built by Leu-447 and Trp-448. Over 455–464 (GEIIEKPSAK) the chain is Cytoplasmic. A helical transmembrane segment spans residues 465-487 (SSDVLGSLNHEYVLVDITTSFTL). Topologically, residues 488–518 (LVGIFFPSVTGIMAGSNRSGDLKDAQKSIPI) are extracellular. Residues 519–545 (GTILAILTTSFVYLSNVVLFGACIEGV) form a helical membrane-spanning segment. The Cytoplasmic portion of the chain corresponds to 546-568 (VLRDKFGDAVKGNLVVGTLSWPS). 2 helical membrane-spanning segments follow: residues 569 to 589 (PWVI…QSLT) and 590 to 612 (GAPR…VFGH). Ile-603 serves as a coordination point for chloride. The Cytoplasmic segment spans residues 613 to 629 (SKANGEPTWALLLTAAI). A run of 2 helical transmembrane segments spans residues 630 to 649 (AELG…LSMF) and 650 to 665 (FLMC…ALQT). Residues 666 to 1150 (LLRTPNWRPR…GGSEVITIYS (485 aa)) lie on the Cytoplasmic side of the membrane. The interval 682–691 (ALSFMGMSIC) is scissor helix. Phosphoserine is present on Ser-736. At Thr-778 the chain carries Phosphothreonine. At Ser-981 the chain carries Phosphoserine. A Phosphothreonine; by OXSR1 and STK39 modification is found at Thr-991. 3 positions are modified to phosphoserine: Ser-1023, Ser-1029, and Ser-1032. Thr-1048 carries the phosphothreonine; by OXSR1 and STK39 modification. Tyr-1121 is subject to Phosphotyrosine. An interaction with CKB region spans residues 1133 to 1150 (ERVLLVRGGGSEVITIYS).

This sequence belongs to the SLC12A transporter family. K/Cl co-transporter subfamily. As to quaternary structure, homodimer; adopts a domain-swap conformation at the scissor helices connecting the transmembrane domain and C-terminal domain. Heterodimer with K-Cl cotransporter SLC12A5. Interacts (via C-terminus) with CKB; the interaction may be required for potassium-chloride cotransport activity. Phosphorylated, phosphorylation regulates transporter activity. Phosphorylated at Thr-991 and Thr-1048 by OXSR1/OSR1 and STK39/SPAK downstream of WNK kinases (WNK1, WNK2, WNK3 or WNK4), inhibiting the potassium-chloride cotransport activity. In terms of processing, N-glycosylated. Expressed in brain (at protein level). Highly expressed in heart, brain and kidney. Detected at lower levels in skeletal muscle, placenta, lung and pancreas. Detected in umbilical vein endothelial cells. In terms of tissue distribution, more abundant in kidney. As to expression, testis specific.

The protein resides in the cell membrane. It localises to the basolateral cell membrane. It catalyses the reaction K(+)(in) + chloride(in) = K(+)(out) + chloride(out). Its activity is regulated as follows. Inhibited following phosphorylation by OXSR1/OSR1 and STK39/SPAK: phosphorylation takes place downstream of WNK kinases (WNK1, WNK2, WNK3 or WNK4) in response to hyperosmotic stress and subsequent cell shrinkage. Activated by N-ethylmaleimide (NEM). Inhibited by DIOA, bumetanide and furosemide. Mediates electroneutral potassium-chloride cotransport when activated by cell swelling. May contribute to cell volume homeostasis in single cells. In terms of biological role, mediates electroneutral potassium-chloride cotransport when activated by cell swelling. May contribute to cell volume homeostasis in single cells. Its function is as follows. Mediates electroneutral potassium-chloride cotransport when activated by cell swelling. May contribute to cell volume homeostasis in single cells. The chain is Solute carrier family 12 member 6 from Homo sapiens (Human).